A 406-amino-acid polypeptide reads, in one-letter code: Phosphopentomutase (406 aa).

The Mn(2+) site is built by Asp-10, Asp-305, His-310, Asp-346, His-347, and His-358.

Belongs to the phosphopentomutase family. Mn(2+) serves as cofactor.

It localises to the cytoplasm. The catalysed reaction is 2-deoxy-alpha-D-ribose 1-phosphate = 2-deoxy-D-ribose 5-phosphate. It catalyses the reaction alpha-D-ribose 1-phosphate = D-ribose 5-phosphate. The protein operates within carbohydrate degradation; 2-deoxy-D-ribose 1-phosphate degradation; D-glyceraldehyde 3-phosphate and acetaldehyde from 2-deoxy-alpha-D-ribose 1-phosphate: step 1/2. Functionally, isomerase that catalyzes the conversion of deoxy-ribose 1-phosphate (dRib-1-P) and ribose 1-phosphate (Rib-1-P) to deoxy-ribose 5-phosphate (dRib-5-P) and ribose 5-phosphate (Rib-5-P), respectively. This Aliivibrio salmonicida (strain LFI1238) (Vibrio salmonicida (strain LFI1238)) protein is Phosphopentomutase.